We begin with the raw amino-acid sequence, 277 residues long: Large ribosomal subunit protein uL2 (277 aa).

Disordered stretches follow at residues 37-60 (KNST…GHKH) and 223-265 (VVMN…KRTD). Over residues 39–49 (STAGRNSNGHI) the composition is skewed to polar residues. Residues 50–60 (TTRHKGGGHKH) show a composition bias toward basic residues. Residues 229–244 (DHPHGGGEGRTGEARE) are compositionally biased toward basic and acidic residues.

Belongs to the universal ribosomal protein uL2 family. Part of the 50S ribosomal subunit. Forms a bridge to the 30S subunit in the 70S ribosome.

In terms of biological role, one of the primary rRNA binding proteins. Required for association of the 30S and 50S subunits to form the 70S ribosome, for tRNA binding and peptide bond formation. It has been suggested to have peptidyltransferase activity; this is somewhat controversial. Makes several contacts with the 16S rRNA in the 70S ribosome. This Neisseria meningitidis serogroup C (strain 053442) protein is Large ribosomal subunit protein uL2.